An 875-amino-acid polypeptide reads, in one-letter code: uncharacterized protein (875 aa).

Residues 83–149 (PFQPPPPQPF…QPPQPPPQQL (67 aa)) are disordered. A compositionally biased stretch (pro residues) spans 101–147 (QQPPQPPPDQPQQPQPPQQPPQQPPQQQPQPPQPPQQPPQPPQPPPQ).

This is an uncharacterized protein from Orgyia pseudotsugata multicapsid polyhedrosis virus (OpMNPV).